A 614-amino-acid chain; its full sequence is Leucine-rich repeat protein soc-2 homolog (614 aa).

2 disordered regions span residues 1-29 (MNLC…SSGP) and 44-79 (NSGG…PNLT). LRR repeat units lie at residues 134–155 (GIKR…VREC), 157–178 (HLTE…IGCL), 180–201 (NLRN…LKHC), 203–224 (QLKV…IYRL), 226–247 (SLTT…LRQL), 249–270 (NLTM…IGAL), 272–293 (NLTT…IGNC), 295–316 (NLSA…IGNL), 318–340 (SLVR…KNCK), 341–362 (SMDE…MLAS), 365–386 (ALTT…GPAQ), 389–410 (NVYS…IFSR), 413–434 (GLTK…VGTW), 436–457 (NMVE…IMNL), 459–480 (NLEI…IGNL), 482–503 (KLRI…IGLL), 505–526 (ELQR…IGHL), 528–549 (NLTH…IGSL), 551–573 (SLEN…LALC), and 575–596 (NLKY…IQAG).

The protein belongs to the SHOC2 family.

Functionally, acts as a Ras effector and participates in MAPK pathway activation. Probably acts as a regulatory subunit of protein phosphatase that specifically dephosphorylates Raf kinase and stimulate Raf activity at specialized signaling complexes upon Ras activation. This chain is Leucine-rich repeat protein soc-2 homolog (Sur-8), found in Drosophila virilis (Fruit fly).